We begin with the raw amino-acid sequence, 1022 residues long: Collagen alpha-2(VI) chain (1022 aa).

The signal sequence occupies residues 1–27; the sequence is MSRRTAEMFQQAFLSTLLCVALVPLHA. Residues 28–255 are nonhelical region; the sequence is QFDDEPVTSC…CYKMTCLEIA (228 aa). A VWFA 1 domain is found at 44–168; the sequence is PISVYFVIDT…VITDGHVTGS (125 aa). N-linked (GlcNAc...) asparagine glycans are attached at residues N141 and N215. The segment at 256–590 is triple-helical region; sequence GPAGPKGYRG…PGPPGDPGLT (335 aa). Positions 263–587 are disordered; the sequence is YRGQKGAKGN…EGTPGPPGDP (325 aa). The span at 287–299 shows a compositional bias: low complexity; the sequence is DPGIEGPIGYPGP. Residues 306–318 are compositionally biased toward basic and acidic residues; the sequence is KGEKGEIGSDGRR. N327 carries an N-linked (GlcNAc...) asparagine glycan. Short sequence motifs (cell attachment site) lie at residues 348-350 and 366-368; these read RGD. Residues 363 to 377 show a composition bias toward basic and acidic residues; that stretch reads QGERGDEGMKGDPGR. The span at 389–399 shows a compositional bias: low complexity; sequence EKGSPGIPGNP. Short sequence motifs (cell attachment site) lie at residues 426 to 428, 444 to 446, 465 to 467, 489 to 491, and 498 to 500; these read RGD. Residues 514-519 are interruption in collagenous region; it reads GFSYPG. Positions 534–543 are enriched in gly residues; sequence GPKGGRGELG. The segment at 591–1022 is nonhelical region; the sequence is DCDVMTYVRE…FFDRFIRWIC (432 aa). VWFA domains lie at 613–738 and 833–957; these read ALDI…YDPR and DIVF…ITGS. N-linked (GlcNAc...) asparagine glycans are attached at residues N630 and N897.

This sequence belongs to the type VI collagen family. As to quaternary structure, trimers composed of three different chains: alpha 1(VI), alpha 2(VI), and alpha 3(VI). Prolines at the third position of the tripeptide repeating unit (G-X-Y) are hydroxylated in some or all of the chains.

The protein localises to the secreted. Its subcellular location is the extracellular space. The protein resides in the extracellular matrix. Functionally, collagen VI acts as a cell-binding protein. In Gallus gallus (Chicken), this protein is Collagen alpha-2(VI) chain (COL6A2).